The primary structure comprises 495 residues: DUF21 domain-containing protein At4g14230 (495 aa).

Topologically, residues methionine 1–cysteine 42 are extracellular. The region spanning glycine 30 to glutamate 212 is the CNNM transmembrane domain. A helical transmembrane segment spans residues phenylalanine 43–leucine 63. Residues valine 64 to histidine 92 are Cytoplasmic-facing. Residues glutamine 93 to leucine 113 traverse the membrane as a helical segment. At aspartate 114–tyrosine 120 the chain is on the extracellular side. A helical membrane pass occupies residues valine 121–isoleucine 141. Over cysteine 142 to glycine 146 the chain is Cytoplasmic. The helical transmembrane segment at leucine 147–isoleucine 167 threads the bilayer. Residues serine 168–asparagine 495 lie on the Extracellular side of the membrane. CBS domains are found at residues methionine 231–leucine 291, glycine 296–glutamate 356, and leucine 357–glutamate 426. Positions lysine 330 to asparagine 354 are disordered. Asparagine 349 is a glycosylation site (N-linked (GlcNAc...) asparagine). Serine 352 is subject to Phosphoserine. Residue asparagine 353 is glycosylated (N-linked (GlcNAc...) asparagine). The disordered stretch occupies residues serine 455–asparagine 495. The segment covering glycine 456–proline 477 has biased composition (low complexity).

The protein localises to the membrane. This Arabidopsis thaliana (Mouse-ear cress) protein is DUF21 domain-containing protein At4g14230 (CBSDUF2).